A 131-amino-acid chain; its full sequence is ATP synthase epsilon chain (131 aa).

It belongs to the ATPase epsilon chain family. As to quaternary structure, F-type ATPases have 2 components, CF(1) - the catalytic core - and CF(0) - the membrane proton channel. CF(1) has five subunits: alpha(3), beta(3), gamma(1), delta(1), epsilon(1). CF(0) has three main subunits: a, b and c.

Its subcellular location is the cell membrane. Produces ATP from ADP in the presence of a proton gradient across the membrane. This is ATP synthase epsilon chain from Bacillus pumilus (strain SAFR-032).